The primary structure comprises 208 residues: Small ribosomal subunit protein uS4 (208 aa).

In terms of domain architecture, S4 RNA-binding spans Leu98 to Glu159.

Belongs to the universal ribosomal protein uS4 family. In terms of assembly, part of the 30S ribosomal subunit. Contacts protein S5. The interaction surface between S4 and S5 is involved in control of translational fidelity.

One of the primary rRNA binding proteins, it binds directly to 16S rRNA where it nucleates assembly of the body of the 30S subunit. Its function is as follows. With S5 and S12 plays an important role in translational accuracy. The chain is Small ribosomal subunit protein uS4 from Anaeromyxobacter dehalogenans (strain 2CP-1 / ATCC BAA-258).